The following is a 129-amino-acid chain: uncharacterized protein (129 aa).

2 disordered regions span residues 1-57 (MGGG…LPNH) and 87-129 (PVSS…WLWW). A compositionally biased stretch (basic and acidic residues) spans 10 to 20 (SGEERREKRSG). Positions 87–99 (PVSSSPSRSPSSS) are enriched in low complexity.

This is an uncharacterized protein from Homo sapiens (Human).